Here is a 215-residue protein sequence, read N- to C-terminus: Pyrrolidone-carboxylate peptidase (215 aa).

Catalysis depends on residues Glu78, Cys141, and His165.

The protein belongs to the peptidase C15 family. As to quaternary structure, homotetramer.

It is found in the cytoplasm. The enzyme catalyses Release of an N-terminal pyroglutamyl group from a polypeptide, the second amino acid generally not being Pro.. Functionally, removes 5-oxoproline from various penultimate amino acid residues except L-proline. The protein is Pyrrolidone-carboxylate peptidase of Streptococcus pyogenes serotype M12 (strain MGAS2096).